The chain runs to 201 residues: Ras-related protein Rab-5A (201 aa).

GTP-binding positions include 16-24 (GEAAVGKSS), 35-41 (LDYQEST), 64-68 (DTAGQ), 122-125 (NKLD), and 152-154 (SAK). The Effector region signature appears at 38–46 (QESTIGAAF). 2 S-geranylgeranyl cysteine lipidation sites follow: cysteine 199 and cysteine 200.

This sequence belongs to the small GTPase superfamily. Rab family.

It localises to the cell membrane. The protein resides in the endosome membrane. Its activity is regulated as follows. Regulated by guanine nucleotide exchange factors (GEFs) which promote the exchange of bound GDP for free GTP. Functionally, required for the fusion of plasma membranes and early endosomes. This chain is Ras-related protein Rab-5A (rab5A), found in Dictyostelium discoideum (Social amoeba).